Consider the following 246-residue polypeptide: Envelope glycoprotein gp95 (246 aa).

At 1 to 192 (IPSRPVGGPC…EWAVHLLKGL (192 aa)) the chain is on the extracellular side. A glycan (N-linked (GlcNAc...) asparagine; by host) is linked at asparagine 31. Residues cysteine 50 and cysteine 86 are joined by a disulfide bond. A fusion peptide region spans residues 58–78 (GPTARIFASILAPGVAAAQAL). A coiled-coil region spans residues 75–125 (AQALREIERLACWSVKQANLTTSLLGDLLDDVTSIRHAVLQNRAAIDFLLL). The N-linked (GlcNAc...) asparagine; by host glycan is linked to asparagine 93. Positions 114–130 (LQNRAAIDFLLLAHGHG) are immunosuppression. An intrachain disulfide couples cysteine 131 to cysteine 138. The N-linked (GlcNAc...) asparagine; by host glycan is linked to asparagine 141. Residues 143–173 (SDQSESIQKKFQLMKEHVNKIGVDSDLIGSW) are a coiled coil. Residues 193–213 (LLGLVVILLLVVCLPCLLQML) traverse the membrane as a helical segment. 2 S-palmitoyl cysteine; by host lipidation sites follow: cysteine 205 and cysteine 208. Residues 214–246 (CGNRRKMINNSISYHTEYKKLQKACGQPESRIV) are Cytoplasmic-facing.

It belongs to the Alpharetroviruses envelope glycoprotein family. In terms of assembly, heterodimer with the transmembrane protein. The mature envelope protein (Env) consists of a trimer of SU-TM heterodimers attached by a labile interchain disulfide bond. Interacts with the host cell entry receptor TVA isoforms pg900 and pg800; this interaction allows the viral attachment. As to quaternary structure, heterodimer with the surface protein. The mature envelope protein (Env) consists of a trimer of SU-TM heterodimers attached by a labile interchain disulfide bond. Post-translationally, specific enzymatic cleavages in vivo yield mature proteins. Envelope glycoproteins are synthesized as an inactive precursor that is N-glycosylated and processed likely by host cell furin or by a furin-like protease in the Golgi to yield the mature SU and TM proteins. The cleavage site between SU and TM requires the minimal sequence [KR]-X-[KR]-R. In terms of processing, the transmembrane protein is palmitoylated. Palmitoylation is necessary for glycoprotein function and infectivity.

It localises to the virion membrane. Its subcellular location is the host cell membrane. Its function is as follows. The surface protein (SU) attaches the virus to the host cell entry receptor TVA. This interaction triggers the refolding of the transmembrane protein (TM) thereby unmasking its fusion peptide and the formation of a reactive thiolate to activate its fusogenic potential. Fusion occurs at the host cell plasma membrane. The transmembrane protein (TM) acts as a class I viral fusion protein. Under the current model, the protein has at least 3 conformational states: pre-fusion native state, pre-hairpin intermediate state, and post-fusion hairpin state. During viral and target cell membrane fusion, the coiled coil regions (heptad repeats) assume a trimer-of-hairpins structure, positioning the fusion peptide in close proximity to the C-terminal region of the ectodomain. The formation of this structure appears to drive apposition and subsequent fusion of viral and target cell membranes. Membranes fusion leads to delivery of the nucleocapsid into the cytoplasm. This is Envelope glycoprotein gp95 (env) from Rous sarcoma virus subgroup A (strain Schmidt-Ruppin) (RSV-SR-A).